The primary structure comprises 81 residues: ATP synthase subunit c (81 aa).

The next 2 membrane-spanning stretches (helical) occupy residues 3–23 (PLIA…GAIG) and 57–77 (LAFM…LLFA).

This sequence belongs to the ATPase C chain family. F-type ATPases have 2 components, F(1) - the catalytic core - and F(0) - the membrane proton channel. F(1) has five subunits: alpha(3), beta(3), gamma(1), delta(1), epsilon(1). F(0) has four main subunits: a(1), b(1), b'(1) and c(10-14). The alpha and beta chains form an alternating ring which encloses part of the gamma chain. F(1) is attached to F(0) by a central stalk formed by the gamma and epsilon chains, while a peripheral stalk is formed by the delta, b and b' chains.

Its subcellular location is the cellular thylakoid membrane. F(1)F(0) ATP synthase produces ATP from ADP in the presence of a proton or sodium gradient. F-type ATPases consist of two structural domains, F(1) containing the extramembraneous catalytic core and F(0) containing the membrane proton channel, linked together by a central stalk and a peripheral stalk. During catalysis, ATP synthesis in the catalytic domain of F(1) is coupled via a rotary mechanism of the central stalk subunits to proton translocation. Its function is as follows. Key component of the F(0) channel; it plays a direct role in translocation across the membrane. A homomeric c-ring of between 10-14 subunits forms the central stalk rotor element with the F(1) delta and epsilon subunits. This chain is ATP synthase subunit c, found in Trichodesmium erythraeum (strain IMS101).